The sequence spans 201 residues: Large ribosomal subunit protein bL25 (201 aa).

The protein belongs to the bacterial ribosomal protein bL25 family. CTC subfamily. As to quaternary structure, part of the 50S ribosomal subunit; part of the 5S rRNA/L5/L18/L25 subcomplex. Contacts the 5S rRNA. Binds to the 5S rRNA independently of L5 and L18.

This is one of the proteins that binds to the 5S RNA in the ribosome where it forms part of the central protuberance. The sequence is that of Large ribosomal subunit protein bL25 from Burkholderia lata (strain ATCC 17760 / DSM 23089 / LMG 22485 / NCIMB 9086 / R18194 / 383).